The sequence spans 303 residues: Nucleotide-binding protein SAB0719 (303 aa).

18–25 (GLSGAGKS) contributes to the ATP binding site. GTP is bound at residue 69–72 (DLRG).

It belongs to the RapZ-like family.

Its function is as follows. Displays ATPase and GTPase activities. This Staphylococcus aureus (strain bovine RF122 / ET3-1) protein is Nucleotide-binding protein SAB0719.